We begin with the raw amino-acid sequence, 214 residues long: 3-demethoxyubiquinol 3-hydroxylase (214 aa).

Residues glutamate 63, glutamate 93, histidine 96, glutamate 145, glutamate 177, and histidine 180 each coordinate Fe cation.

It belongs to the COQ7 family. Requires Fe cation as cofactor.

The protein resides in the cell membrane. It carries out the reaction a 5-methoxy-2-methyl-3-(all-trans-polyprenyl)benzene-1,4-diol + AH2 + O2 = a 3-demethylubiquinol + A + H2O. The protein operates within cofactor biosynthesis; ubiquinone biosynthesis. Catalyzes the hydroxylation of 2-nonaprenyl-3-methyl-6-methoxy-1,4-benzoquinol during ubiquinone biosynthesis. This Nitrosococcus oceani (strain ATCC 19707 / BCRC 17464 / JCM 30415 / NCIMB 11848 / C-107) protein is 3-demethoxyubiquinol 3-hydroxylase.